The sequence spans 587 residues: Aspartate--tRNA ligase (587 aa).

Glu-174 contributes to the L-aspartate binding site. The aspartate stretch occupies residues 198–201 (QITK). Arg-220 serves as a coordination point for L-aspartate. ATP contacts are provided by residues 220–222 (RDE) and Gln-229. His-443 is a binding site for L-aspartate. Glu-477 is a binding site for ATP. L-aspartate is bound at residue Arg-484. ATP is bound at residue 529 to 532 (GLDR).

The protein belongs to the class-II aminoacyl-tRNA synthetase family. Type 1 subfamily. As to quaternary structure, homodimer.

It localises to the cytoplasm. It carries out the reaction tRNA(Asp) + L-aspartate + ATP = L-aspartyl-tRNA(Asp) + AMP + diphosphate. Catalyzes the attachment of L-aspartate to tRNA(Asp) in a two-step reaction: L-aspartate is first activated by ATP to form Asp-AMP and then transferred to the acceptor end of tRNA(Asp). This Streptococcus pneumoniae (strain 70585) protein is Aspartate--tRNA ligase.